The sequence spans 409 residues: Nucleoprotein (409 aa).

Disordered regions lie at residues 1–32, 47–84, 121–145, and 164–194; these read MASGKAAGKSDAPTPIIKLGGPKPPKIGSSGN, PQPKFEGSGVPDNNNIKPSQQHGYWRRQARYKPGKSGR, ADTKSRSNQGTRDPDKFDQYPLRFS, and RSGRSTAASSAASSRAPSREGSRGRRSGAED. Residues 29–160 are RNA-binding; the sequence is SSGNASWFQA…GNFRWDFIPL (132 aa). The region spanning 31–156 is the CoV N NTD domain; that stretch reads GNASWFQAIK…GGPDGNFRWD (126 aa). The span at 57–68 shows a compositional bias: polar residues; it reads PDNNNIKPSQQH. The segment covering 70-84 has biased composition (basic residues); sequence YWRRQARYKPGKSGR. A compositionally biased stretch (low complexity) spans 164–179; sequence RSGRSTAASSAASSRA. Basic and acidic residues predominate over residues 180 to 192; the sequence is PSREGSRGRRSGA. A Phosphoserine; by host modification is found at serine 190. A CoV N CTD domain is found at 215-331; sequence TKAKADEMAH…QCVDGVGTRP (117 aa). The segment at 226–333 is dimerization; the sequence is RYCKRTIPPG…VDGVGTRPKD (108 aa). The cysteines at positions 320 and 323 are disulfide-linked. Residues 326–409 are disordered; it reads GVGTRPKDDE…GDSALGENEL (84 aa). A compositionally biased stretch (basic residues) spans 358–367; it reads QRPKKEKKPK. Positions 368–384 are enriched in basic and acidic residues; sequence KQDDEVDKALTSDEERN. Threonine 378 carries the post-translational modification Phosphothreonine; by host. Serine 379 bears the Phosphoserine; by host mark.

This sequence belongs to the gammacoronavirus nucleocapsid protein family. In terms of assembly, homooligomer. Both monomeric and oligomeric forms interact with RNA. Interacts with protein M. Interacts with NSP3; this interaction serves to tether the genome to the newly translated replicase-transcriptase complex at a very early stage of infection. ADP-ribosylated. The ADP-ribosylation is retained in the virion during infection. In terms of processing, phosphorylated on serine and threonine residues.

The protein resides in the virion. Its subcellular location is the host endoplasmic reticulum-Golgi intermediate compartment. It is found in the host Golgi apparatus. Its function is as follows. Packages the positive strand viral genome RNA into a helical ribonucleocapsid (RNP) and plays a fundamental role during virion assembly through its interactions with the viral genome and membrane protein M. Plays an important role in enhancing the efficiency of subgenomic viral RNA transcription as well as viral replication. This chain is Nucleoprotein, found in Gallus gallus (Chicken).